The primary structure comprises 459 residues: Phosphoglucosamine mutase (459 aa).

Catalysis depends on Ser-102, which acts as the Phosphoserine intermediate. Mg(2+) contacts are provided by Ser-102, Asp-243, Asp-245, and Asp-247. At Ser-102 the chain carries Phosphoserine.

This sequence belongs to the phosphohexose mutase family. It depends on Mg(2+) as a cofactor. In terms of processing, activated by phosphorylation.

It carries out the reaction alpha-D-glucosamine 1-phosphate = D-glucosamine 6-phosphate. In terms of biological role, catalyzes the conversion of glucosamine-6-phosphate to glucosamine-1-phosphate. In Bartonella henselae (strain ATCC 49882 / DSM 28221 / CCUG 30454 / Houston 1) (Rochalimaea henselae), this protein is Phosphoglucosamine mutase.